A 151-amino-acid chain; its full sequence is Large ribosomal subunit protein bL9 (151 aa).

The protein belongs to the bacterial ribosomal protein bL9 family.

Functionally, binds to the 23S rRNA. This Kosmotoga olearia (strain ATCC BAA-1733 / DSM 21960 / TBF 19.5.1) protein is Large ribosomal subunit protein bL9.